A 1036-amino-acid chain; its full sequence is Isoleucine--tRNA ligase (1036 aa).

A 'HIGH' region motif is present at residues 46 to 56 (PFATGLPHYGH). The 'KMSKS' region motif lies at 589-593 (KMSKR). Residue Lys-592 participates in ATP binding.

This sequence belongs to the class-I aminoacyl-tRNA synthetase family. IleS type 2 subfamily. In terms of assembly, monomer. It depends on Zn(2+) as a cofactor.

The protein resides in the cytoplasm. It carries out the reaction tRNA(Ile) + L-isoleucine + ATP = L-isoleucyl-tRNA(Ile) + AMP + diphosphate. Its function is as follows. Catalyzes the attachment of isoleucine to tRNA(Ile). As IleRS can inadvertently accommodate and process structurally similar amino acids such as valine, to avoid such errors it has two additional distinct tRNA(Ile)-dependent editing activities. One activity is designated as 'pretransfer' editing and involves the hydrolysis of activated Val-AMP. The other activity is designated 'posttransfer' editing and involves deacylation of mischarged Val-tRNA(Ile). The polypeptide is Isoleucine--tRNA ligase (Chlamydia muridarum (strain MoPn / Nigg)).